A 137-amino-acid chain; its full sequence is uncharacterized protein (137 aa).

The tract at residues 116 to 137 (ARPPRGSGGTRTARNGARTASE) is disordered. The segment covering 125 to 137 (TRTARNGARTASE) has biased composition (polar residues).

This is an uncharacterized protein from Mycobacterium bovis (strain ATCC BAA-935 / AF2122/97).